The following is a 182-amino-acid chain: Adenylate kinase (182 aa).

ATP is bound at residue 12 to 17; that stretch reads GAGKGT. The segment at 32-61 is NMP; it reads STGDLLRAEVKAGSELGKEAEAVMNRGELV. Residues Thr33, Arg38, 59–61, 85–88, and Gln92 contribute to the AMP site; these read ELV and GFPR. Residues 126–132 form an LID region; sequence ARGRADD. An ATP-binding site is contributed by Arg127. AMP is bound by residues Arg129 and Arg140. Gly168 serves as a coordination point for ATP.

This sequence belongs to the adenylate kinase family. Monomer.

Its subcellular location is the cytoplasm. It carries out the reaction AMP + ATP = 2 ADP. The protein operates within purine metabolism; AMP biosynthesis via salvage pathway; AMP from ADP: step 1/1. Its function is as follows. Catalyzes the reversible transfer of the terminal phosphate group between ATP and AMP. Plays an important role in cellular energy homeostasis and in adenine nucleotide metabolism. In Synechococcus sp. (strain RCC307), this protein is Adenylate kinase.